The sequence spans 318 residues: Ribose-phosphate pyrophosphokinase 1 (318 aa).

96–101 (RQDKKD) provides a ligand contact to ATP. The Mg(2+) site is built by D128, H130, D139, and D143. Position 130 (H130) interacts with ATP. Residues 212–227 (KDRVAILVDDMADTCG) form a binding of phosphoribosylpyrophosphate region.

It belongs to the ribose-phosphate pyrophosphokinase family. In terms of assembly, homodimer. The active form is probably a hexamer composed of 3 homodimers. Mg(2+) is required as a cofactor.

It catalyses the reaction D-ribose 5-phosphate + ATP = 5-phospho-alpha-D-ribose 1-diphosphate + AMP + H(+). It functions in the pathway metabolic intermediate biosynthesis; 5-phospho-alpha-D-ribose 1-diphosphate biosynthesis; 5-phospho-alpha-D-ribose 1-diphosphate from D-ribose 5-phosphate (route I): step 1/1. Its activity is regulated as follows. Activated by magnesium and inorganic phosphate. Catalyzes the synthesis of phosphoribosylpyrophosphate (PRPP) that is essential for nucleotide synthesis. This Bos taurus (Bovine) protein is Ribose-phosphate pyrophosphokinase 1 (PRPS1).